A 191-amino-acid polypeptide reads, in one-letter code: Guanylate kinase (191 aa).

The Guanylate kinase-like domain occupies 4-182; it reads GRLIVVSGPS…AREEMIEIMR (179 aa). An ATP-binding site is contributed by 11-18; that stretch reads GPSGAGKS.

This sequence belongs to the guanylate kinase family.

It localises to the cytoplasm. The catalysed reaction is GMP + ATP = GDP + ADP. Essential for recycling GMP and indirectly, cGMP. The polypeptide is Guanylate kinase (Rubrobacter xylanophilus (strain DSM 9941 / JCM 11954 / NBRC 16129 / PRD-1)).